A 111-amino-acid chain; its full sequence is Nucleoid-associated protein PFL_1905 (111 aa).

2 disordered regions span residues 1–20 and 88–111; these read MKGG…EKMA and SNSQ…KLPF.

Belongs to the YbaB/EbfC family. Homodimer.

Its subcellular location is the cytoplasm. It is found in the nucleoid. Binds to DNA and alters its conformation. May be involved in regulation of gene expression, nucleoid organization and DNA protection. This is Nucleoid-associated protein PFL_1905 from Pseudomonas fluorescens (strain ATCC BAA-477 / NRRL B-23932 / Pf-5).